A 124-amino-acid polypeptide reads, in one-letter code: Small ribosomal subunit protein uS12 (124 aa).

Asp89 is subject to 3-methylthioaspartic acid. A disordered region spans residues 105–124; sequence QGVKNRKQARSRYGAKKEKS. Positions 108–118 are enriched in basic residues; that stretch reads KNRKQARSRYG.

This sequence belongs to the universal ribosomal protein uS12 family. As to quaternary structure, part of the 30S ribosomal subunit. Contacts proteins S8 and S17. May interact with IF1 in the 30S initiation complex.

Its function is as follows. With S4 and S5 plays an important role in translational accuracy. Functionally, interacts with and stabilizes bases of the 16S rRNA that are involved in tRNA selection in the A site and with the mRNA backbone. Located at the interface of the 30S and 50S subunits, it traverses the body of the 30S subunit contacting proteins on the other side and probably holding the rRNA structure together. The combined cluster of proteins S8, S12 and S17 appears to hold together the shoulder and platform of the 30S subunit. In Mycobacterium leprae (strain Br4923), this protein is Small ribosomal subunit protein uS12.